We begin with the raw amino-acid sequence, 157 residues long: Regenerating islet-derived protein 4 (157 aa).

The signal sequence occupies residues 1 to 22 (MASKGVRLLLLLSWVAGPEVLS). A disulfide bridge links Cys-29 with Cys-40. The C-type lectin domain occupies 36–154 (YRSHCYGYFR…CANRQHFLCK (119 aa)). Asn-49 and Asn-62 each carry an N-linked (GlcNAc...) asparagine glycan. 2 disulfides stabilise this stretch: Cys-57/Cys-153 and Cys-128/Cys-145. Residues 97–102 (DPQKKQ) and 134–136 (KDK) each bind a carbohydrate.

It localises to the secreted. In terms of biological role, calcium-independent lectin displaying mannose-binding specificity and able to maintain carbohydrate recognition activity in an acidic environment. May be involved in inflammatory and metaplastic responses of the gastrointestinal epithelium. The sequence is that of Regenerating islet-derived protein 4 (Reg4) from Mus musculus (Mouse).